Consider the following 330-residue polypeptide: MHPKVDALLSRFPRITLIPWETPIQYLPRISRELGVDVYVKRDDLTGLGIGGNKIRKLEFLLGDALSRGCDTVITIGAVHSNHAFVTALAAKKLGLGAVLILRGEEVLKGNYLLDKLMGIETRIYEADNSWELMKVAEEVAEELKGEGKKPYIIPPGGASPVGTLGYIRGVGELYTQVKKLGLRIDTVVDAVGSGGTYAGLLLGSAIVNAEWSVVGIDVSSATEKAKERVKNLVEKTKELLGINVKVQEPRIYDYGFGAYGKIVKEVAKLIKSVGTMEGLLLDPVYTGKAFYGLMDLAKKGDLGESVLFIHTGGLPGIFHYGEEMLELLV.

N6-(pyridoxal phosphate)lysine is present on K54.

This sequence belongs to the ACC deaminase/D-cysteine desulfhydrase family. Requires pyridoxal 5'-phosphate as cofactor.

It catalyses the reaction 1-aminocyclopropane-1-carboxylate + H2O = 2-oxobutanoate + NH4(+). In Pyrococcus abyssi (strain GE5 / Orsay), this protein is Putative 1-aminocyclopropane-1-carboxylate deaminase.